A 484-amino-acid polypeptide reads, in one-letter code: Sperm motility kinase 2B (484 aa).

Residues 8–256 enclose the Protein kinase domain; the sequence is YVMLETIGHG…VAEVMVHPWV (249 aa). ATP contacts are provided by residues 14-22 and K37; that span reads IGHGGCSKV. The Proton acceptor role is filled by D127. The UBA domain maps to 272–314; it reads PLKPNPAIVKAMGYIGFQAQDIEDSLRQRKFNETMASYCLLKK. Composition is skewed to polar residues over residues 356-373 and 422-434; these read PTSL…CGRS and SSDD…TSAS. Disordered regions lie at residues 356-400 and 422-450; these read PTSL…TMDH and SSDD…RGIK.

It belongs to the protein kinase superfamily. CAMK Ser/Thr protein kinase family. Smok subfamily. As to expression, testis-specific. Expressed in the testis from 22 days postpartum (22 dpp).

The enzyme catalyses L-seryl-[protein] + ATP = O-phospho-L-seryl-[protein] + ADP + H(+). It carries out the reaction L-threonyl-[protein] + ATP = O-phospho-L-threonyl-[protein] + ADP + H(+). Its function is as follows. May play a role in sperm motility, especially in the regulation of flagellar function. The protein is Sperm motility kinase 2B of Mus musculus (Mouse).